The sequence spans 368 residues: Protein ALTERED XYLOGLUCAN 9 (368 aa).

The Cytoplasmic segment spans residues 1-32; sequence MLGAIHLGVLAACFVLFVPMAMAGWHLSRNKM. Residues 33–53 traverse the membrane as a helical segment; sequence LFFSGALFISLAVCVHLTPYF. Over 54–368 the chain is Lumenal; the sequence is PSVSDIVASV…ALLIESHQSL (315 aa). N-linked (GlcNAc...) asparagine glycosylation is found at asparagine 99, asparagine 137, and asparagine 235.

The protein resides in the golgi apparatus membrane. In terms of biological role, component of the plant cell wall polysaccharide acetylation pathway. Does not directly catalyze O-acetylation of xyloglucan but exhibits weak acetylesterase activity in vitro. The chain is Protein ALTERED XYLOGLUCAN 9 from Arabidopsis thaliana (Mouse-ear cress).